A 167-amino-acid chain; its full sequence is Urease accessory protein UreE (167 aa).

The interval 135–167 (SGAYGGGHHHSHSHHEGDEFHSKPRLHHFGGSQ) is disordered. The span at 157-167 (KPRLHHFGGSQ) shows a compositional bias: basic residues.

This sequence belongs to the UreE family.

Its subcellular location is the cytoplasm. Involved in urease metallocenter assembly. Binds nickel. Probably functions as a nickel donor during metallocenter assembly. The chain is Urease accessory protein UreE from Nitrosococcus oceani (strain ATCC 19707 / BCRC 17464 / JCM 30415 / NCIMB 11848 / C-107).